Reading from the N-terminus, the 354-residue chain is Fructose-bisphosphate aldolase (354 aa).

D-glyceraldehyde 3-phosphate is bound at residue serine 61. Catalysis depends on aspartate 104, which acts as the Proton donor. The Zn(2+) site is built by histidine 105, aspartate 139, glutamate 169, and histidine 221. Residue glycine 222 coordinates dihydroxyacetone phosphate. Histidine 260 is a Zn(2+) binding site. Residues 261 to 263 and 282 to 285 each bind dihydroxyacetone phosphate; these read GGS and NIDT.

It belongs to the class II fructose-bisphosphate aldolase family. In terms of assembly, homodimer. Zn(2+) serves as cofactor.

The enzyme catalyses beta-D-fructose 1,6-bisphosphate = D-glyceraldehyde 3-phosphate + dihydroxyacetone phosphate. The protein operates within carbohydrate degradation; glycolysis; D-glyceraldehyde 3-phosphate and glycerone phosphate from D-glucose: step 4/4. In terms of biological role, catalyzes the aldol condensation of dihydroxyacetone phosphate (DHAP or glycerone-phosphate) with glyceraldehyde 3-phosphate (G3P) to form fructose 1,6-bisphosphate (FBP) in gluconeogenesis and the reverse reaction in glycolysis. This is Fructose-bisphosphate aldolase (fba) from Campylobacter jejuni subsp. jejuni serotype O:23/36 (strain 81-176).